Reading from the N-terminus, the 450-residue chain is Tubulin beta-6 chain (450 aa).

Positions 11, 71, 140, 144, 145, 146, 206, and 228 each coordinate GTP. Glu71 contacts Mg(2+). Residues 429 to 450 are disordered; it reads DATVEDEEEYEGEEGLDENYET. The segment covering 431-450 has biased composition (acidic residues); it reads TVEDEEEYEGEEGLDENYET.

It belongs to the tubulin family. As to quaternary structure, dimer of alpha and beta chains. A typical microtubule is a hollow water-filled tube with an outer diameter of 25 nm and an inner diameter of 15 nM. Alpha-beta heterodimers associate head-to-tail to form protofilaments running lengthwise along the microtubule wall with the beta-tubulin subunit facing the microtubule plus end conferring a structural polarity. Microtubules usually have 13 protofilaments but different protofilament numbers can be found in some organisms and specialized cells. Mg(2+) is required as a cofactor.

Its subcellular location is the cytoplasm. It localises to the cytoskeleton. Its function is as follows. Tubulin is the major constituent of microtubules, a cylinder consisting of laterally associated linear protofilaments composed of alpha- and beta-tubulin heterodimers. Microtubules grow by the addition of GTP-tubulin dimers to the microtubule end, where a stabilizing cap forms. Below the cap, tubulin dimers are in GDP-bound state, owing to GTPase activity of alpha-tubulin. The polypeptide is Tubulin beta-6 chain (Gossypium hirsutum (Upland cotton)).